The primary structure comprises 311 residues: Glycine--tRNA ligase alpha subunit (311 aa).

Belongs to the class-II aminoacyl-tRNA synthetase family. Tetramer of two alpha and two beta subunits.

Its subcellular location is the cytoplasm. It carries out the reaction tRNA(Gly) + glycine + ATP = glycyl-tRNA(Gly) + AMP + diphosphate. The sequence is that of Glycine--tRNA ligase alpha subunit from Bradyrhizobium diazoefficiens (strain JCM 10833 / BCRC 13528 / IAM 13628 / NBRC 14792 / USDA 110).